The primary structure comprises 309 residues: Serine/threonine-protein phosphatase 4 catalytic subunit (309 aa).

Residues aspartate 52, histidine 54, aspartate 80, and asparagine 112 each contribute to the Mn(2+) site. Histidine 113 serves as the catalytic Proton donor. Histidine 162 and histidine 236 together coordinate Mn(2+). Leucine 309 carries the post-translational modification Leucine methyl ester.

This sequence belongs to the PPP phosphatase family. PP-4 (PP-X) subfamily. In terms of assembly, catalytic subunit of the histone H2A phosphatase complex (HTP-C) containing PPH3, PSY2 and PSY4. Mn(2+) serves as cofactor.

It is found in the cytoplasm. The protein localises to the nucleus. It catalyses the reaction O-phospho-L-seryl-[protein] + H2O = L-seryl-[protein] + phosphate. It carries out the reaction O-phospho-L-threonyl-[protein] + H2O = L-threonyl-[protein] + phosphate. In terms of biological role, forms the histone H2A phosphatase complex in association with the regulatory subunits PSY2 and PSY4, which dephosphorylates H2AS128ph (gamma-H2A) that has been displaced from sites of DNA lesions in the double-stranded DNA break repair process. Dephosphorylation is necessary for efficient recovery from the DNA damage checkpoint. This is Serine/threonine-protein phosphatase 4 catalytic subunit (PPH3) from Candida glabrata (strain ATCC 2001 / BCRC 20586 / JCM 3761 / NBRC 0622 / NRRL Y-65 / CBS 138) (Yeast).